A 256-amino-acid polypeptide reads, in one-letter code: Omega-amidase YafV (256 aa).

The CN hydrolase domain maps to 4–234 (LKLTLLQQPL…AAQLDAELSL (231 aa)). Glu42 serves as the catalytic Proton acceptor. The active site involves Lys107. The active-site Nucleophile is the Cys141.

Belongs to the carbon-nitrogen hydrolase superfamily. NIT1/NIT2 family.

It carries out the reaction a monoamide of a dicarboxylate + H2O = a dicarboxylate + NH4(+). Hydrolyzes alpha-ketoglutaramate (a-KGM) to alpha-ketoglutarate (alpha-KG) and ammonia (specific activity 21 umol/min/mg), has very weak activity on L-glutamine, and no activity on deaminated glutathione (dGSH) or glutathione. May function as a metabolite repair enzyme. This Yersinia enterocolitica protein is Omega-amidase YafV.